The following is a 98-amino-acid chain: Cytochrome c2 (98 aa).

Gln-1 is subject to Pyrrolidone carboxylic acid. Heme c-binding residues include Cys-10, Cys-13, His-14, and Met-76.

The protein belongs to the cytochrome c family. Binds 1 heme c group covalently per subunit.

The protein resides in the periplasm. In terms of biological role, cytochrome c2 is found mainly in purple, non-sulfur, photosynthetic bacteria where it functions as the electron donor to the oxidized bacteriochlorophyll in the photophosphorylation pathway. However, it may also have a role in the respiratory chain and is found in some non-photosynthetic bacteria. The protein is Cytochrome c2 of Rhodoplanes tepidamans (Rhodoplanes cryptolactis).